Here is a 63-residue protein sequence, read N- to C-terminus: Cecropin-B (63 aa).

A signal peptide spans 1–22; the sequence is MNFAKILSFVFALVLALSMTSA. The propeptide at 23-26 is removed by a dipeptidylpeptidase; sequence APEP. Lys-47 is modified (5-hydroxylysine; partial). Ile-61 is modified (isoleucine amide).

It belongs to the cecropin family. Lepidopteran-B differs from lepidopteran-A by its hydroxylated residue. Highest expression in fat body and hemocytes. Is also expressed in Malpighian tubules and to a much lesser extent in midgut. Not present in silk gland.

It is found in the secreted. Functionally, cecropins have lytic and antibacterial activity against several Gram-positive and Gram-negative bacteria. The protein is Cecropin-B (CECB1) of Bombyx mori (Silk moth).